Here is a 152-residue protein sequence, read N- to C-terminus: UPF0178 protein SAS0646 (152 aa).

This sequence belongs to the UPF0178 family.

This Staphylococcus aureus (strain MSSA476) protein is UPF0178 protein SAS0646.